The chain runs to 393 residues: MKILSVNAGSSSLKFQLLQMPEEFEIASGLVERIGNKNAEFKIKFNGSSKTQSDLVVLDHSVAVDLVIKGLLENKVIASLDEIQGVGHRVVQGGQLFKESVVIDDDVVIKIASLNDLAPLHNPANIIGINAFRKAISNVIHVAVFDTTFHQTMPEENFLYGTPYEWYTKHGVRKYGFHGTSHQYVSELAHARLGKDHSRIIVAHIGNGASITAVRDGKSIDTSMGLTPLEGFPTGTRSGNVDPAIFQLMQQKEGYSLEKTLNELNKNSGYLGISGVSHDSRDIIAAAEGGNKRAQLALDIQAKRIVDYIASYYVLLGGLDALVFTAGIGENAKEVRKLICDRLGVLGIKLDDNKNNSRGDKEISSDASNVKIWVIPTNEEVMIARDVLRLQNK.

N7 contributes to the Mg(2+) binding site. Position 14 (K14) interacts with ATP. R89 serves as a coordination point for substrate. The active-site Proton donor/acceptor is the D146. Residues 204–208, 279–281, and 327–331 each bind ATP; these read HIGNG, DSR, and GIGEN. E379 lines the Mg(2+) pocket.

The protein belongs to the acetokinase family. As to quaternary structure, homodimer. Mg(2+) is required as a cofactor. Requires Mn(2+) as cofactor.

Its subcellular location is the cytoplasm. It carries out the reaction acetate + ATP = acetyl phosphate + ADP. The protein operates within metabolic intermediate biosynthesis; acetyl-CoA biosynthesis; acetyl-CoA from acetate: step 1/2. Its function is as follows. Catalyzes the formation of acetyl phosphate from acetate and ATP. Can also catalyze the reverse reaction. The polypeptide is Acetate kinase (Acholeplasma laidlawii (strain PG-8A)).